Consider the following 160-residue polypeptide: Putative NrdI-like protein (160 aa).

Belongs to the NrdI family.

The protein is Putative NrdI-like protein of Streptococcus pyogenes serotype M1.